Here is a 434-residue protein sequence, read N- to C-terminus: Putative B3 domain-containing protein Os04g0347400 (434 aa).

3 DNA-binding regions (TF-B3) span residues 27–124, 150–246, and 326–432; these read SFHK…FDTT, KPQF…FGIN, and WIKK…DRVE.

It localises to the nucleus. The polypeptide is Putative B3 domain-containing protein Os04g0347400 (Oryza sativa subsp. japonica (Rice)).